The sequence spans 254 residues: Allene oxide cyclase 4, chloroplastic (254 aa).

A chloroplast-targeting transit peptide spans 1–52; it reads MIMASSAAASISMITLRNLSRNHQSHQSTFLGFSRSFHNQRISSNSPGLSTR.

The protein belongs to the allene oxide cyclase family. Highly expressed in fully developed leaves.

Its subcellular location is the plastid. It localises to the chloroplast. It carries out the reaction (9Z,13S,15Z)-12,13-epoxyoctadeca-9,11,15-trienoate = (9S,13S,15Z)-12-oxophyto-10,15-dienoate. Functionally, involved in the production of 12-oxo-phytodienoic acid (OPDA), a precursor of jasmonic acid. This is Allene oxide cyclase 4, chloroplastic (AOC4) from Arabidopsis thaliana (Mouse-ear cress).